The following is a 190-amino-acid chain: Photosynthetic NDH subunit of lumenal location 2, chloroplastic (190 aa).

Residues 1-31 (MSSFTTTNTPPPYLLRKIYHRRVNQPFSVVC) constitute a chloroplast transit peptide. Residues 32–68 (CTGEPQQDIFTRRRTLTSLITFTVIGGATSSALAQEK) constitute a thylakoid transit peptide. Coiled coils occupy residues 87-107 (EDAAARIKQTAEGLRDMREML) and 139-159 (ESRRNDYVQAANELVENMSEL).

This sequence belongs to the PsbQ family. As to quaternary structure, part of the chloroplast NDH complex, composed of a mixture of chloroplast and nucleus encoded subunits. Component of the NDH lumenal subcomplex, at least composed of PnsL1, PnsL2, PnsL3, PnsL4 and PnsL5.

It is found in the plastid. It localises to the chloroplast thylakoid membrane. Its function is as follows. NDH shuttles electrons from NAD(P)H:plastoquinone, via FMN and iron-sulfur (Fe-S) centers, to quinones in the photosynthetic chain and possibly in a chloroplast respiratory chain. The immediate electron acceptor for the enzyme in this species is believed to be plastoquinone. Couples the redox reaction to proton translocation, and thus conserves the redox energy in a proton gradient. Required for both formation and activity of the chloroplast NAD(P)H dehydrogenase (NDH) complex. In Arabidopsis thaliana (Mouse-ear cress), this protein is Photosynthetic NDH subunit of lumenal location 2, chloroplastic.